A 460-amino-acid polypeptide reads, in one-letter code: Cobyrinate a,c-diamide synthase (460 aa).

One can recognise a GATase cobBQ-type domain in the interval 248 to 440 (KIAVARDAAF…THFHFGSSTK (193 aa)). The active-site Nucleophile is Cys331.

This sequence belongs to the CobB/CbiA family. Mg(2+) serves as cofactor.

It carries out the reaction cob(II)yrinate + 2 L-glutamine + 2 ATP + 2 H2O = cob(II)yrinate a,c diamide + 2 L-glutamate + 2 ADP + 2 phosphate + 2 H(+). Its pathway is cofactor biosynthesis; adenosylcobalamin biosynthesis; cob(II)yrinate a,c-diamide from sirohydrochlorin (anaerobic route): step 10/10. Catalyzes the ATP-dependent amidation of the two carboxylate groups at positions a and c of cobyrinate, using either L-glutamine or ammonia as the nitrogen source. The polypeptide is Cobyrinate a,c-diamide synthase (Priestia megaterium (Bacillus megaterium)).